The chain runs to 496 residues: Guanosine-5'-triphosphate,3'-diphosphate pyrophosphatase (496 aa).

Belongs to the GppA/Ppx family. GppA subfamily.

It catalyses the reaction guanosine 3'-diphosphate 5'-triphosphate + H2O = guanosine 3',5'-bis(diphosphate) + phosphate + H(+). Its pathway is purine metabolism; ppGpp biosynthesis; ppGpp from GTP: step 2/2. Functionally, catalyzes the conversion of pppGpp to ppGpp. Guanosine pentaphosphate (pppGpp) is a cytoplasmic signaling molecule which together with ppGpp controls the 'stringent response', an adaptive process that allows bacteria to respond to amino acid starvation, resulting in the coordinated regulation of numerous cellular activities. In Aeromonas hydrophila subsp. hydrophila (strain ATCC 7966 / DSM 30187 / BCRC 13018 / CCUG 14551 / JCM 1027 / KCTC 2358 / NCIMB 9240 / NCTC 8049), this protein is Guanosine-5'-triphosphate,3'-diphosphate pyrophosphatase.